The chain runs to 241 residues: Large ribosomal subunit protein uL3 (241 aa).

Disordered regions lie at residues 139–164 and 215–241; these read VSHR…KMPG and DAPK…QEGA. Glutamine 151 carries the post-translational modification N5-methylglutamine.

Belongs to the universal ribosomal protein uL3 family. As to quaternary structure, part of the 50S ribosomal subunit. Forms a cluster with proteins L14 and L19. In terms of processing, methylated by PrmB.

Functionally, one of the primary rRNA binding proteins, it binds directly near the 3'-end of the 23S rRNA, where it nucleates assembly of the 50S subunit. The sequence is that of Large ribosomal subunit protein uL3 from Rhodopseudomonas palustris (strain BisB5).